The sequence spans 90 residues: Probable Fe(2+)-trafficking protein (90 aa).

Belongs to the Fe(2+)-trafficking protein family. As to quaternary structure, monomer.

Its function is as follows. Could be a mediator in iron transactions between iron acquisition and iron-requiring processes, such as synthesis and/or repair of Fe-S clusters in biosynthetic enzymes. The polypeptide is Probable Fe(2+)-trafficking protein (Pectobacterium atrosepticum (strain SCRI 1043 / ATCC BAA-672) (Erwinia carotovora subsp. atroseptica)).